Consider the following 152-residue polypeptide: Nucleoside diphosphate kinase (152 aa).

ATP contacts are provided by Lys11, Phe59, Arg87, Thr93, Arg104, and Asn114. His117 acts as the Pros-phosphohistidine intermediate in catalysis.

The protein belongs to the NDK family. Homotetramer. Requires Mg(2+) as cofactor.

The protein resides in the cytoplasm. The catalysed reaction is a 2'-deoxyribonucleoside 5'-diphosphate + ATP = a 2'-deoxyribonucleoside 5'-triphosphate + ADP. The enzyme catalyses a ribonucleoside 5'-diphosphate + ATP = a ribonucleoside 5'-triphosphate + ADP. Major role in the synthesis of nucleoside triphosphates other than ATP. The ATP gamma phosphate is transferred to the NDP beta phosphate via a ping-pong mechanism, using a phosphorylated active-site intermediate. The polypeptide is Nucleoside diphosphate kinase (Prochlorococcus marinus (strain MIT 9312)).